We begin with the raw amino-acid sequence, 950 residues long: Protocadherin alpha-3 (950 aa).

An N-terminal signal peptide occupies residues 1-29 (MLFSWREDPGAQCLLLSLLLLAASEVGSG). 6 Cadherin domains span residues 30–133 (QLHY…APVF), 134–242 (PMSV…APAF), 243–350 (ERTI…VPEL), 351–455 (VIHS…APAF), 456–565 (SQSE…APAL), and 581–678 (VPRS…APKA). Residues 30 to 697 (QLHYSVSEEA…GPEAALVDVN (668 aa)) are Extracellular-facing. 2 N-linked (GlcNAc...) asparagine glycosylation sites follow: N257 and N265. An N-linked (GlcNAc...) asparagine glycan is attached at N548. A helical transmembrane segment spans residues 698–718 (VYLIVAICAVSSLLVLTLLLY). Residues 719 to 950 (TALRCSAPPT…GNSTTDNSDQ (232 aa)) lie on the Cytoplasmic side of the membrane. 2 PXXP repeats span residues 734–737 (PGKP) and 774–777 (PSLP). The interval 734–894 (PGKPTLVCSS…PDKFIIPGSP (161 aa)) is 6 X 4 AA repeats of P-X-X-P. Disordered stretches follow at residues 777–806 (PPCP…NPDW), 831–856 (GPGG…EVSP), and 869–889 (FKYG…DKFI). Positions 782-797 (SRDREEKQDVDVDLSA) are enriched in basic and acidic residues. 4 PXXP repeats span residues 799–802 (PRQP), 832–835 (PGGP), 873–876 (PGNP), and 891–894 (PGSP). The interval 901–950 (QEPANSQIDKSDFITFGKKEETKKKKKKKKGNKTQEKKEKGNSTTDNSDQ) is disordered. The span at 909-923 (DKSDFITFGKKEETK) shows a compositional bias: basic and acidic residues.

Its subcellular location is the cell membrane. Its function is as follows. Potential calcium-dependent cell-adhesion protein. May be involved in the establishment and maintenance of specific neuronal connections in the brain. The chain is Protocadherin alpha-3 (PCDHA3) from Pan troglodytes (Chimpanzee).